Consider the following 648-residue polypeptide: Biosynthetic arginine decarboxylase (648 aa).

Position 109 is an N6-(pyridoxal phosphate)lysine (Lys-109). Residue 291-301 coordinates substrate; the sequence is IDVGGGLGIDF.

Belongs to the Orn/Lys/Arg decarboxylase class-II family. SpeA subfamily. Requires Mg(2+) as cofactor. The cofactor is pyridoxal 5'-phosphate.

It catalyses the reaction L-arginine + H(+) = agmatine + CO2. The protein operates within amine and polyamine biosynthesis; agmatine biosynthesis; agmatine from L-arginine: step 1/1. Functionally, catalyzes the biosynthesis of agmatine from arginine. This Prochlorococcus marinus (strain AS9601) protein is Biosynthetic arginine decarboxylase.